The chain runs to 388 residues: F-box protein At5g42460 (388 aa).

The region spanning 1-47 (MTIMSDLPRDLLAEILSRVPLTSLRAVRLTCKKWNDLSKDRSFLKKQ) is the F-box domain.

The sequence is that of F-box protein At5g42460 from Arabidopsis thaliana (Mouse-ear cress).